The sequence spans 571 residues: Phosphoenolpyruvate-protein phosphotransferase (571 aa).

H189 (tele-phosphohistidine intermediate) is an active-site residue. R296 and R332 together coordinate phosphoenolpyruvate. Positions 431 and 455 each coordinate Mg(2+). Phosphoenolpyruvate is bound by residues 454–455 (ND) and R465. C502 functions as the Proton donor in the catalytic mechanism.

It belongs to the PEP-utilizing enzyme family. In terms of assembly, homodimer. Mg(2+) is required as a cofactor.

Its subcellular location is the cytoplasm. The enzyme catalyses L-histidyl-[protein] + phosphoenolpyruvate = N(pros)-phospho-L-histidyl-[protein] + pyruvate. Functionally, general (non sugar-specific) component of the phosphoenolpyruvate-dependent sugar phosphotransferase system (sugar PTS). This major carbohydrate active-transport system catalyzes the phosphorylation of incoming sugar substrates concomitantly with their translocation across the cell membrane. Enzyme I transfers the phosphoryl group from phosphoenolpyruvate (PEP) to the phosphoryl carrier protein (HPr). This Buchnera aphidicola subsp. Acyrthosiphon pisum (strain APS) (Acyrthosiphon pisum symbiotic bacterium) protein is Phosphoenolpyruvate-protein phosphotransferase (ptsI).